The chain runs to 583 residues: MKRSLQALYCQLLSFLLTLALTEALVFAAQEPSPRESLQVSPSGTIPGTMVTASLSSTRHSSMVATPASVVTPTPHPDGPSSQATAPMATTTPHLDGHPPTNTISTIMATASTPHSEGSLSTGPLPAAMATTSSHSEGRAPGETAPTILLTKPGEATSRPPTAPSRATIRRPPRPPGSSRKGAGSSPRPIPAAPSGHAGRKDGQRGRNQSSTHLGQKRPLGKIFQIYKGNFTGSVEPDPSTFTPRNPLWGYSSSPQPQTVAATSAPSRTSWVPPTTPLVPVEDKPSLSRADQGGGSTFTSQGGEPDATAASGTPASQQRAPVPSQRPHGDPQDGSSHSDSWLTVTPGTSRPPSTNSGVFAATTGPIQAAFDASVSVPSEGLPQGTSLAPQAPAHPTWASESTVSQAEEKAVATPTPTMMGRVPSPLSTVVSTATGNFLNRLVPAGTWKPGTAGNISHVAEGDKPQQRATICLSKMDIAWVILAISVPISSCSVLLTVCCLRRKKKPANPENSLSYWNNAITMDYFSKHAVELPREIQSLETSEDQLSEPRSPANGDYRDTGMVLVNPFCQETLFVGNDQVSEI.

A helical transmembrane segment spans residues 7–27 (ALYCQLLSFLLTLALTEALVF). Residues 31 to 176 (EPSPRESLQV…ATIRRPPRPP (146 aa)) form an interacts with SH3GL2 region. 2 disordered regions span residues 71–360 (VTPT…GVFA) and 376–404 (VPSE…STVS). Composition is skewed to polar residues over residues 80 to 93 (PSSQ…TTTP) and 100 to 122 (PTNT…SLST). The segment covering 177-187 (GSSRKGAGSSP) has biased composition (low complexity). The segment at 180 to 413 (RKGAGSSPRP…SQAEEKAVAT (234 aa)) is interacts with DST (isoform 1). Composition is skewed to polar residues over residues 251–273 (YSSS…SWVP), 310–319 (ASGTPASQQR), and 333–357 (DGSS…TNSG). Residues 477–497 (IAWVILAISVPISSCSVLLTV) form a helical membrane-spanning segment. The interval 498 to 583 (CCLRRKKKPA…FVGNDQVSEI (86 aa)) is interaction with CYFIP2.

As to quaternary structure, interacts with DST (isoform 1). Interacts with SH3GL2. Interacts (via N-terminus) with CYFIP1 and CYFIP2; the interactions associate TMEM108 with the WAVE1 complex. Glycosylated.

The protein resides in the membrane. Its subcellular location is the postsynaptic density. It localises to the endosome membrane. The protein localises to the cell projection. It is found in the axon. The protein resides in the dendrite. Its subcellular location is the early endosome. In terms of biological role, transmembrane protein required for proper cognitive functions. Involved in the development of dentate gyrus (DG) neuron circuitry, is necessary for AMPA receptors surface expression and proper excitatory postsynaptic currents of DG granule neurons. Regulates the organization and stability of the microtubule network of sensory neurons to allow axonal transport. Through the interaction with DST, mediates the docking of the dynein/dynactin motor complex to vesicle cargos for retrograde axonal transport. In hippocampal neurons, required for BDNF-dependent dendrite outgrowth. Cooperates with SH3GL2 and recruits the WAVE1 complex to facilitate actin-dependent BDNF:NTRK2 early endocytic trafficking and mediate signaling from early endosomes. In Bos taurus (Bovine), this protein is Transmembrane protein 108.